The sequence spans 91 residues: Small ribosomal subunit protein uS19 (91 aa).

It belongs to the universal ribosomal protein uS19 family.

Protein S19 forms a complex with S13 that binds strongly to the 16S ribosomal RNA. This chain is Small ribosomal subunit protein uS19, found in Cupriavidus pinatubonensis (strain JMP 134 / LMG 1197) (Cupriavidus necator (strain JMP 134)).